Reading from the N-terminus, the 416-residue chain is ORC1-type DNA replication protein 9 (416 aa).

ATP contacts are provided by residues 79 to 83 (SGKSL), Tyr226, and Arg238.

The protein belongs to the CDC6/cdc18 family.

Its function is as follows. Involved in regulation of DNA replication. This is ORC1-type DNA replication protein 9 (cdc6i) from Haloarcula marismortui (strain ATCC 43049 / DSM 3752 / JCM 8966 / VKM B-1809) (Halobacterium marismortui).